The primary structure comprises 170 residues: Adenine phosphoribosyltransferase (170 aa).

It belongs to the purine/pyrimidine phosphoribosyltransferase family. In terms of assembly, homodimer.

The protein localises to the cytoplasm. The catalysed reaction is AMP + diphosphate = 5-phospho-alpha-D-ribose 1-diphosphate + adenine. It participates in purine metabolism; AMP biosynthesis via salvage pathway; AMP from adenine: step 1/1. In terms of biological role, catalyzes a salvage reaction resulting in the formation of AMP, that is energically less costly than de novo synthesis. The sequence is that of Adenine phosphoribosyltransferase from Oceanobacillus iheyensis (strain DSM 14371 / CIP 107618 / JCM 11309 / KCTC 3954 / HTE831).